Here is a 201-residue protein sequence, read N- to C-terminus: ATP-dependent dethiobiotin synthetase BioD (201 aa).

11-16 (DVGKTH) is a binding site for ATP. A Mg(2+)-binding site is contributed by T15. K31 is an active-site residue. ATP is bound by residues D40 and 93 to 96 (ELAG). D40 and E93 together coordinate Mg(2+).

This sequence belongs to the dethiobiotin synthetase family. Homodimer. The cofactor is Mg(2+).

The protein resides in the cytoplasm. It carries out the reaction (7R,8S)-7,8-diammoniononanoate + CO2 + ATP = (4R,5S)-dethiobiotin + ADP + phosphate + 3 H(+). The protein operates within cofactor biosynthesis; biotin biosynthesis; biotin from 7,8-diaminononanoate: step 1/2. In terms of biological role, catalyzes a mechanistically unusual reaction, the ATP-dependent insertion of CO2 between the N7 and N8 nitrogen atoms of 7,8-diaminopelargonic acid (DAPA, also called 7,8-diammoniononanoate) to form a ureido ring. This Campylobacter jejuni subsp. jejuni serotype O:6 (strain 81116 / NCTC 11828) protein is ATP-dependent dethiobiotin synthetase BioD.